The sequence spans 194 residues: 3-isopropylmalate dehydratase small subunit (194 aa).

Belongs to the LeuD family. LeuD type 1 subfamily. Heterodimer of LeuC and LeuD.

It carries out the reaction (2R,3S)-3-isopropylmalate = (2S)-2-isopropylmalate. The protein operates within amino-acid biosynthesis; L-leucine biosynthesis; L-leucine from 3-methyl-2-oxobutanoate: step 2/4. Its function is as follows. Catalyzes the isomerization between 2-isopropylmalate and 3-isopropylmalate, via the formation of 2-isopropylmaleate. This Leuconostoc mesenteroides subsp. mesenteroides (strain ATCC 8293 / DSM 20343 / BCRC 11652 / CCM 1803 / JCM 6124 / NCDO 523 / NBRC 100496 / NCIMB 8023 / NCTC 12954 / NRRL B-1118 / 37Y) protein is 3-isopropylmalate dehydratase small subunit.